The following is a 523-amino-acid chain: MDNIHNHKILILDFGSQYTQLIARRVREIGVYCELWAWDVTEQQIREFNPTGIILSGGPESTTENDSPRAPEYVFDAGVPVLGVCYGMQTMAMQLGGLTEGSAHREFGYAQVDLQATDSLFAQLNDDLDSAQPKLDVWMSHGDKVTRLPEGFQVTGTTPTCPIAAMSDEKRHFYGVQFHPEVTHTKSGLALLTNFVVNICGCATNWTPENIIEDAVARIKAQVGDDEVILGLSGGVDSSVTALLLHRAIGKNLHCVFVDNGLLRLNEGDQVMEMFGDKFGLNIIRVNAEERFLDALKGIHDPEAKRKMIGKVFVDVFDEESHKQTSVKWLAQGTIYPDVIESAASKTGKAHVIKSHHNVGGLPDYMKLGLVEPLRELFKDEVRKIGLALGLPAEMLNRHPFPGPGLGVRVLGEIKKEYCDLLRKADAIFIEELYNSGWYYKVSQAFTVFLPVKSVGVMGDGRKYDWVVSLRAVETIDFMTAHWAQLPYDLLGKISNRIINEVDGISRVVYDVSGKPPATIEWE.

A Glutamine amidotransferase type-1 domain is found at 8 to 205 (KILILDFGSQ…VVNICGCATN (198 aa)). Cysteine 85 acts as the Nucleophile in catalysis. Residues histidine 179 and glutamate 181 contribute to the active site. A GMPS ATP-PPase domain is found at 206–398 (WTPENIIEDA…LGLPAEMLNR (193 aa)). 233-239 (SGGVDSS) lines the ATP pocket.

In terms of assembly, homodimer.

It carries out the reaction XMP + L-glutamine + ATP + H2O = GMP + L-glutamate + AMP + diphosphate + 2 H(+). It functions in the pathway purine metabolism; GMP biosynthesis; GMP from XMP (L-Gln route): step 1/1. Catalyzes the synthesis of GMP from XMP. This Actinobacillus succinogenes (strain ATCC 55618 / DSM 22257 / CCUG 43843 / 130Z) protein is GMP synthase [glutamine-hydrolyzing].